Here is a 99-residue protein sequence, read N- to C-terminus: Signal recognition particle 19 kDa protein (99 aa).

The protein belongs to the SRP19 family. In terms of assembly, part of the signal recognition particle protein translocation system, which is composed of SRP and FtsY. Archaeal SRP consists of a 7S RNA molecule of 300 nucleotides and two protein subunits: SRP54 and SRP19.

The protein resides in the cytoplasm. In terms of biological role, involved in targeting and insertion of nascent membrane proteins into the cytoplasmic membrane. Binds directly to 7S RNA and mediates binding of the 54 kDa subunit of the SRP. The sequence is that of Signal recognition particle 19 kDa protein from Ignicoccus hospitalis (strain KIN4/I / DSM 18386 / JCM 14125).